We begin with the raw amino-acid sequence, 398 residues long: MPRPGHPRPASGPPRLGPWERPTELCLETYDKPPQPPPSRRTRRPDPKDPGHHGPESITFISGSAEPALESPTCCLLWRPWVWEWCRAAFCFRRCRDCLQRCGACVRGCSPCLSTEDSTEGTAEANWAKEHNGVPPSPDRAPPSRRDGQRLKSTMGSSFSYPDVKLKGIPVYPYPRATSPAPDADSCCKEPLADPPPMRHSLPSTFASSPRGSEEYYSFHESDLDLPEMGSGSMSSREIDVLIFKKLTELFSVHQIDELAKCTSDTVFLEKTSKISDLISSITQDYHLDEQDAEGRLVRGIIRISTRKSRARPQTSEGRSTRAAAPTAAAPDSGHETMVGSGLSQDELTVQISQETTADAIARKLRPYGAPGYPASHDSSFQGTDTDSSGAPLLQVYC.

Disordered stretches follow at residues 1–60 (MPRP…SITF) and 123–156 (AEAN…STMG). Basic and acidic residues predominate over residues 44-55 (RPDPKDPGHHGP). Phosphoserine is present on Ser-218. 2 disordered regions span residues 307–340 (RKSR…TMVG) and 369–392 (GAPG…SGAP). A compositionally biased stretch (polar residues) spans 377–389 (HDSSFQGTDTDSS).

The protein resides in the cytoplasm. Its subcellular location is the cell junction. Plays a role in the regulation of the epidermis formation during early development. Required both as an inhibitor of basal cell proliferation and a promoter of differentiation of basal progenitor cell progeny. This chain is Keratinocyte differentiation factor 1 (KDF1), found in Homo sapiens (Human).